The primary structure comprises 56 residues: Large ribosomal subunit protein bL32 (56 aa).

Residues 1–56 (MAVQQNRKTRSKRGMRRSHDALSAPTLSQDKETGTTHRRHHVAPDGFYRGRKVVDV) are disordered. The span at 7 to 16 (RKTRSKRGMR) shows a compositional bias: basic residues.

This sequence belongs to the bacterial ribosomal protein bL32 family.

The protein is Large ribosomal subunit protein bL32 of Chromohalobacter salexigens (strain ATCC BAA-138 / DSM 3043 / CIP 106854 / NCIMB 13768 / 1H11).